A 142-amino-acid polypeptide reads, in one-letter code: Large ribosomal subunit protein uL11 (142 aa).

The protein belongs to the universal ribosomal protein uL11 family. In terms of assembly, part of the ribosomal stalk of the 50S ribosomal subunit. Interacts with L10 and the large rRNA to form the base of the stalk. L10 forms an elongated spine to which L12 dimers bind in a sequential fashion forming a multimeric L10(L12)X complex. In terms of processing, one or more lysine residues are methylated.

Its function is as follows. Forms part of the ribosomal stalk which helps the ribosome interact with GTP-bound translation factors. This Haemophilus influenzae (strain PittGG) protein is Large ribosomal subunit protein uL11.